Here is a 615-residue protein sequence, read N- to C-terminus: Chaperone protein DnaK (615 aa).

Phosphothreonine; by autocatalysis is present on Thr174. The disordered stretch occupies residues 581–615 (QAAPKDGAEGDAKSADDNTVDGDFEEVDPNKDDKK). A compositionally biased stretch (basic and acidic residues) spans 586–596 (DGAEGDAKSAD). The span at 598–607 (NTVDGDFEEV) shows a compositional bias: acidic residues.

Belongs to the heat shock protein 70 family.

In terms of biological role, acts as a chaperone. The chain is Chaperone protein DnaK from Leuconostoc mesenteroides subsp. mesenteroides (strain ATCC 8293 / DSM 20343 / BCRC 11652 / CCM 1803 / JCM 6124 / NCDO 523 / NBRC 100496 / NCIMB 8023 / NCTC 12954 / NRRL B-1118 / 37Y).